Consider the following 307-residue polypeptide: Predicted GPI-anchored protein 44 (307 aa).

The first 22 residues, 1-22 (MLSTNNLLILLIFSFLITNVKS), serve as a signal peptide directing secretion. Residues Asn-146 and Asn-217 are each glycosylated (N-linked (GlcNAc...) asparagine). The tract at residues 232–261 (TPQPLLETPSQESSAPNIDSTTPTTIDNTV) is disordered. Residues 239–254 (TPSQESSAPNIDSTTP) are compositionally biased toward polar residues. Gly-286 is lipidated: GPI-anchor amidated glycine. A propeptide spans 287–307 (GAMGYPSISVALGLVFIAYLV) (removed in mature form).

It is found in the cell membrane. The polypeptide is Predicted GPI-anchored protein 44 (PGA44) (Candida albicans (strain SC5314 / ATCC MYA-2876) (Yeast)).